The primary structure comprises 285 residues: MSSQSHIPYAVRASRHSNPLARQLFQIAEEKKSNVVVSADVTTSKELLDLADRLGPYITVLKTHIDILTDLSPTTLTSLKSLASKHRFLLFEDRKFVDIGSTVQKQYHGGSLRISEWAHIVNCAMLAGPGIVDALAQTASTPEFRSVYANEVEGGRALLILAEMTSKGSMATGAYTQLSVEAARRHRAFVLGFVATRALNDVLPVSTVDGDEEDFVVFTTGVSLSASGDALGQQYQTPTSAVERGADFIISGRGIYAAEDPLEAVLRYREEGWKAYLERVKGWKA.

Substrate contacts are provided by residues Asp-40, 62-64 (KTH), 93-102 (DRKFVDIGST), Tyr-235, and Arg-253. Lys-95 acts as the Proton donor in catalysis.

It belongs to the OMP decarboxylase family.

The enzyme catalyses orotidine 5'-phosphate + H(+) = UMP + CO2. It participates in pyrimidine metabolism; UMP biosynthesis via de novo pathway; UMP from orotate: step 2/2. The chain is Orotidine 5'-phosphate decarboxylase (URA3) from Paracoccidioides brasiliensis.